We begin with the raw amino-acid sequence, 331 residues long: Pseudouridylate synthase TRUB2, mitochondrial (331 aa).

The transit peptide at 1–10 directs the protein to the mitochondrion; it reads MGSAGLSRLH. The Nucleophile role is filled by Asp98. Residues 296–331 form a disordered region; that stretch reads KSLSPGLDTKQLPSPGWSWDSQGPSSTLGLERGAGQ. A compositionally biased stretch (polar residues) spans 314 to 323; it reads WDSQGPSSTL.

It belongs to the pseudouridine synthase TruB family. As to quaternary structure, forms a regulatory protein-RNA complex, consisting of RCC1L, NGRN, RPUSD3, RPUSD4, TRUB2, FASTKD2 and 16S mt-rRNA.

The protein resides in the mitochondrion matrix. It carries out the reaction a uridine in mRNA = a pseudouridine in mRNA. The enzyme catalyses uridine(55) in tRNA = pseudouridine(55) in tRNA. In terms of biological role, minor enzyme contributing to the isomerization of uridine to pseudouridine (pseudouridylation) of specific mitochondrial mRNAs (mt-mRNAs) such as COXI and COXIII mt-mRNAs. As a component of a functional protein-RNA module, consisting of RCC1L, NGRN, RPUSD3, RPUSD4, TRUB2, FASTKD2 and 16S mitochondrial ribosomal RNA (16S mt-rRNA), controls 16S mt-rRNA abundance and is required for intra-mitochondrial translation. Also catalyzes pseudouridylation of some tRNAs, including synthesis of pseudouridine(55) from uracil-55, in the psi GC loop of a subset of tRNAs. This chain is Pseudouridylate synthase TRUB2, mitochondrial, found in Homo sapiens (Human).